A 465-amino-acid polypeptide reads, in one-letter code: 3-isopropylmalate dehydratase large subunit (465 aa).

[4Fe-4S] cluster is bound by residues cysteine 347, cysteine 407, and cysteine 410. The segment at 417–443 (TLKPGERSASTSNRNFEGRQGKGGRTH) is disordered.

It belongs to the aconitase/IPM isomerase family. LeuC type 1 subfamily. As to quaternary structure, heterodimer of LeuC and LeuD. Requires [4Fe-4S] cluster as cofactor.

The catalysed reaction is (2R,3S)-3-isopropylmalate = (2S)-2-isopropylmalate. Its pathway is amino-acid biosynthesis; L-leucine biosynthesis; L-leucine from 3-methyl-2-oxobutanoate: step 2/4. Its function is as follows. Catalyzes the isomerization between 2-isopropylmalate and 3-isopropylmalate, via the formation of 2-isopropylmaleate. The protein is 3-isopropylmalate dehydratase large subunit of Thermobifida fusca (strain YX).